Here is a 316-residue protein sequence, read N- to C-terminus: Secondary metabolism regulator laeA (316 aa).

The protein belongs to the methyltransferase superfamily. LaeA methyltransferase family. Component of the heterotrimeric velvet complex composed of laeA, veA and velB; VeA acting as a bridging protein between laeA and velB.

The protein localises to the nucleus. It catalyses the reaction L-methionyl-[protein] + S-adenosyl-L-methionine = S-methyl-L-methionyl-[protein] + S-adenosyl-L-homocysteine. Methyltransferase that performs automethylation. No other methyl-accepting substrate has been identified yet. Component of the velvet transcription factor complex that acts as a global regulator for secondary metabolite gene expression. Controls the biosynthetic gene cluster for beauvericin, a depsipeptide mycotoxin that functions as a virulence determinant. The velvet complex also regulates chromatin structure and transcription of siderophore biosynthetic genes and is required for infection of tomato plants. The velvet complex also governs expression of nitrate metabolism genes. This is Secondary metabolism regulator laeA from Fusarium oxysporum f. sp. lycopersici (strain 4287 / CBS 123668 / FGSC 9935 / NRRL 34936) (Fusarium vascular wilt of tomato).